The following is a 149-amino-acid chain: NADH-quinone oxidoreductase subunit I 1 (149 aa).

2 4Fe-4S ferredoxin-type domains span residues 51 to 82 (LKSFADTGTHKCIACGTCERMCPSNVIKVQGT) and 93 to 122 (THYVIDFTRCSLCGICVESCPTGTLQYSTE). Positions 62, 65, 68, 72, 102, 105, 108, and 112 each coordinate [4Fe-4S] cluster.

Belongs to the complex I 23 kDa subunit family. NDH-1 is composed of 14 different subunits. Subunits NuoA, H, J, K, L, M, N constitute the membrane sector of the complex. [4Fe-4S] cluster is required as a cofactor.

The protein resides in the cell inner membrane. The enzyme catalyses a quinone + NADH + 5 H(+)(in) = a quinol + NAD(+) + 4 H(+)(out). Its function is as follows. NDH-1 shuttles electrons from NADH, via FMN and iron-sulfur (Fe-S) centers, to quinones in the respiratory chain. The immediate electron acceptor for the enzyme in this species is believed to be ubiquinone. Couples the redox reaction to proton translocation (for every two electrons transferred, four hydrogen ions are translocated across the cytoplasmic membrane), and thus conserves the redox energy in a proton gradient. This chain is NADH-quinone oxidoreductase subunit I 1, found in Syntrophobacter fumaroxidans (strain DSM 10017 / MPOB).